The sequence spans 475 residues: Retrotransposon Gag-like protein 3 (475 aa).

Basic and acidic residues-rich tracts occupy residues 51-66 and 78-87; these read LLRK…KLPE and KTPEFKEPQK. 3 disordered regions span residues 51–101, 152–173, and 397–421; these read LLRK…EPPA, EPKN…APEY, and DPNP…ENQP. Residues 443-462 form a CCHC-type zinc finger; sequence RLCLYCGYPGHFARDCPVKP.

Its subcellular location is the nucleus. May function as a transcriptional regulator. Plays a role in postnatal myogenesis, may be involved in the regulation of satellite cells self-renewal. The sequence is that of Retrotransposon Gag-like protein 3 from Homo sapiens (Human).